The following is a 111-amino-acid chain: MASNKQTKLHVRTGDNVIVISGDDKRKSGKVLSVDKENQKAIVEGINIVTKHNKPTANVPNGGIVKKEAPIHISKLMIADPKTGKATRIGRKEDKNGKMVRYAKQSGEVIK.

Belongs to the universal ribosomal protein uL24 family. Part of the 50S ribosomal subunit.

One of two assembly initiator proteins, it binds directly to the 5'-end of the 23S rRNA, where it nucleates assembly of the 50S subunit. Its function is as follows. One of the proteins that surrounds the polypeptide exit tunnel on the outside of the subunit. This Cytophaga hutchinsonii (strain ATCC 33406 / DSM 1761 / CIP 103989 / NBRC 15051 / NCIMB 9469 / D465) protein is Large ribosomal subunit protein uL24.